A 335-amino-acid chain; its full sequence is 4-hydroxythreonine-4-phosphate dehydrogenase (335 aa).

Threonine 132 lines the substrate pocket. A divalent metal cation is bound by residues histidine 163, histidine 208, and histidine 263. 3 residues coordinate substrate: lysine 271, asparagine 280, and arginine 289.

It belongs to the PdxA family. In terms of assembly, homodimer. Zn(2+) is required as a cofactor. Requires Mg(2+) as cofactor. It depends on Co(2+) as a cofactor.

The protein localises to the cytoplasm. The catalysed reaction is 4-(phosphooxy)-L-threonine + NAD(+) = 3-amino-2-oxopropyl phosphate + CO2 + NADH. Its pathway is cofactor biosynthesis; pyridoxine 5'-phosphate biosynthesis; pyridoxine 5'-phosphate from D-erythrose 4-phosphate: step 4/5. Functionally, catalyzes the NAD(P)-dependent oxidation of 4-(phosphooxy)-L-threonine (HTP) into 2-amino-3-oxo-4-(phosphooxy)butyric acid which spontaneously decarboxylates to form 3-amino-2-oxopropyl phosphate (AHAP). The polypeptide is 4-hydroxythreonine-4-phosphate dehydrogenase (Zymomonas mobilis subsp. mobilis (strain ATCC 31821 / ZM4 / CP4)).